A 360-amino-acid chain; its full sequence is Methionine import ATP-binding protein MetN (360 aa).

Residues 1 to 22 form a disordered region; sequence MSHTASTPTPEEYSAQQPSTQG. Residues 25-265 form the ABC transporter domain; it reads VEFRGITKVF…PQTQVAQKFV (241 aa). 62-69 contributes to the ATP binding site; it reads GYSGAGKS.

Belongs to the ABC transporter superfamily. Methionine importer (TC 3.A.1.24) family. As to quaternary structure, the complex is composed of two ATP-binding proteins (MetN), two transmembrane proteins (MetI) and a solute-binding protein (MetQ).

The protein localises to the cell membrane. The enzyme catalyses L-methionine(out) + ATP + H2O = L-methionine(in) + ADP + phosphate + H(+). The catalysed reaction is D-methionine(out) + ATP + H2O = D-methionine(in) + ADP + phosphate + H(+). In terms of biological role, part of the ABC transporter complex MetNIQ involved in methionine import. Responsible for energy coupling to the transport system. The protein is Methionine import ATP-binding protein MetN of Corynebacterium glutamicum (strain ATCC 13032 / DSM 20300 / JCM 1318 / BCRC 11384 / CCUG 27702 / LMG 3730 / NBRC 12168 / NCIMB 10025 / NRRL B-2784 / 534).